The following is a 125-amino-acid chain: Large ribosomal subunit protein bL12 (125 aa).

The protein belongs to the bacterial ribosomal protein bL12 family. In terms of assembly, homodimer. Part of the ribosomal stalk of the 50S ribosomal subunit. Forms a multimeric L10(L12)X complex, where L10 forms an elongated spine to which 2 to 4 L12 dimers bind in a sequential fashion. Binds GTP-bound translation factors.

Forms part of the ribosomal stalk which helps the ribosome interact with GTP-bound translation factors. Is thus essential for accurate translation. This chain is Large ribosomal subunit protein bL12, found in Francisella tularensis subsp. novicida (strain U112).